The chain runs to 260 residues: F-actin-capping protein subunit beta (260 aa).

This sequence belongs to the F-actin-capping protein beta subunit family. In terms of assembly, component of the F-actin capping complex, composed of a heterodimer of an alpha and a beta subunit.

Its subcellular location is the cytoplasm. The protein resides in the cytoskeleton. It localises to the actin patch. In terms of biological role, F-actin-capping proteins bind in a Ca(2+)-independent manner to the fast growing ends of actin filaments (barbed end) thereby blocking the exchange of subunits at these ends. Unlike other capping proteins (such as gelsolin and severin), these proteins do not sever actin filaments. This is F-actin-capping protein subunit beta (CAP2) from Yarrowia lipolytica (strain CLIB 122 / E 150) (Yeast).